We begin with the raw amino-acid sequence, 209 residues long: Large ribosomal subunit protein uL3 (209 aa).

Residues 128 to 163 (AHRGPMTHGSKFHRAVGSMGASSDPSRTFKNKRMPG) are disordered.

Belongs to the universal ribosomal protein uL3 family. As to quaternary structure, part of the 50S ribosomal subunit. Forms a cluster with proteins L14 and L19.

Its function is as follows. One of the primary rRNA binding proteins, it binds directly near the 3'-end of the 23S rRNA, where it nucleates assembly of the 50S subunit. The sequence is that of Large ribosomal subunit protein uL3 from Clostridium botulinum (strain 657 / Type Ba4).